A 197-amino-acid chain; its full sequence is Putative peptidyl-prolyl cis-trans isomerase (197 aa).

The region spanning 14-195 (NEIKLIMHTN…HDITIDSIEI (182 aa)) is the PPIase cyclophilin-type domain.

It belongs to the cyclophilin-type PPIase family.

It carries out the reaction [protein]-peptidylproline (omega=180) = [protein]-peptidylproline (omega=0). In terms of biological role, PPIases accelerate the folding of proteins. It catalyzes the cis-trans isomerization of proline imidic peptide bonds in oligopeptides. The sequence is that of Putative peptidyl-prolyl cis-trans isomerase from Staphylococcus saprophyticus subsp. saprophyticus (strain ATCC 15305 / DSM 20229 / NCIMB 8711 / NCTC 7292 / S-41).